The primary structure comprises 356 residues: Histidinol-phosphate aminotransferase (356 aa).

Lys-214 is modified (N6-(pyridoxal phosphate)lysine).

Belongs to the class-II pyridoxal-phosphate-dependent aminotransferase family. Histidinol-phosphate aminotransferase subfamily. As to quaternary structure, homodimer. Pyridoxal 5'-phosphate is required as a cofactor.

It catalyses the reaction L-histidinol phosphate + 2-oxoglutarate = 3-(imidazol-4-yl)-2-oxopropyl phosphate + L-glutamate. The protein operates within amino-acid biosynthesis; L-histidine biosynthesis; L-histidine from 5-phospho-alpha-D-ribose 1-diphosphate: step 7/9. This chain is Histidinol-phosphate aminotransferase, found in Escherichia coli (strain 55989 / EAEC).